Reading from the N-terminus, the 417-residue chain is Actin-related protein 10 (417 aa).

Belongs to the actin family. Subunit of dynactin, a multiprotein complex part of a tripartite complex with dynein and a adapter, such as BICDL1, BICD2 or HOOK3. The dynactin complex is built around ACTR1A/ACTB filament and consists of an actin-related filament composed of a shoulder domain, a pointed end and a barbed end. Its length is defined by its flexible shoulder domain. The soulder is composed of 2 DCTN1 subunits, 4 DCTN2 and 2 DCTN3. The 4 DCNT2 (via N-terminus) bind the ACTR1A filament and act as molecular rulers to determine the length. The pointed end is important for binding dynein-dynactin cargo adapters. Consists of 4 subunits: ACTR10, DCNT4, DCTN5 and DCTN6. The barbed end is composed of a CAPZA1:CAPZB heterodimers, which binds ACTR1A/ACTB filament and dynactin and stabilizes dynactin.

It is found in the cytoplasm. The protein resides in the cytoskeleton. Its function is as follows. Part of the dynactin complex that activates the molecular motor dynein for ultra-processive transport along microtubules. This chain is Actin-related protein 10 (ACTR10), found in Sus scrofa (Pig).